We begin with the raw amino-acid sequence, 86 residues long: Candiduxin-1 (86 aa).

A signal peptide spans 1–21 (MKTLLLTLVVLTIACLDLGYT). 4 cysteine pairs are disulfide-bonded: C24/C45, C38/C62, C66/C78, and C79/C84.

The protein belongs to the three-finger toxin family. Short-chain subfamily. Orphan group IX sub-subfamily. In terms of tissue distribution, expressed by the venom gland.

The protein resides in the secreted. The protein is Candiduxin-1 of Bungarus candidus (Malayan krait).